The primary structure comprises 525 residues: MHRAPSPTAEQPPGGGDSARRTLQPRLKPSARAMALPRTLGELQLYRVLQRANLLSYYETFIQQGGDDVQQLCEAGEEEFLEIMALVGMATKPLHVRRLQKALREWATNPGLFSQPVPAVPVSSIPLFKISETAGTRKGSMSNGHGSPGEKAGSARSFSPKSPLELGEKLSPLPGGPGAGDPRIWPGRSTPESDVGAGGEEEAGSPPFSPPAGGGVPEGTGAGGLAAGGTGGGPDRLEPEMVRMVVESVERIFRSFPRGDAGEVTSLLKLNKKLARSVGHIFEMDDNDSQKEEEIRKYSIIYGRFDSKRREGKQLSLHELTINEAAAQFCMRDNTLLLRRVELFSLSRQVARESTYLSSLKGSRLHPEELGGPPLKKLKQEVGEQSHPEIQQPPPGPESYVPPYRPSLEEDSASLSGESLDGHLQAVGSCPRLTPPPADLPLALPAHGLWSRHILQQTLMDEGLRLARLVSHDRVGRLSPCVPAKPPLAEFEEGLLDRCPAPGPHPALVEGRRSSVKVEAEASRQ.

Residues 1 to 22 form a disordered region; it reads MHRAPSPTAEQPPGGGDSARRT. Phosphoserine is present on Ser-6. The NCD1 stretch occupies residues 35-113; the sequence is ALPRTLGELQ…REWATNPGLF (79 aa). The segment at 135–237 is disordered; sequence GTRKGSMSNG…GGTGGGPDRL (103 aa). Residues Ser-157, Ser-159, Ser-162, and Ser-171 each carry the phosphoserine modification. A compositionally biased stretch (gly residues) spans 212 to 234; it reads AGGGVPEGTGAGGLAAGGTGGGP. Residues 267-356 are NCD2; sequence LLKLNKKLAR…SRQVARESTY (90 aa). Residues 353 to 384 form a necessary for nuclear localization region; sequence ESTYLSSLKGSRLHPEELGGPPLKKLKQEVGE. A Glycyl lysine isopeptide (Lys-Gly) (interchain with G-Cter in SUMO1) cross-link involves residue Lys-379. Residues 380-416 are disordered; it reads QEVGEQSHPEIQQPPPGPESYVPPYRPSLEEDSASLS. Ser-479 is modified (phosphoserine). Positions 502–525 are disordered; that stretch reads PGPHPALVEGRRSSVKVEAEASRQ. Residues 510–525 show a composition bias toward basic and acidic residues; it reads EGRRSSVKVEAEASRQ. Lys-517 is covalently cross-linked (Glycyl lysine isopeptide (Lys-Gly) (interchain with G-Cter in SUMO1); alternate). A Glycyl lysine isopeptide (Lys-Gly) (interchain with G-Cter in SUMO2); alternate cross-link involves residue Lys-517.

It belongs to the NAB family. Homomultimers may associate with EGR1 bound to DNA. Post-translationally, sumoylation by EGR2 represses EGR2 transcriptional activity in hindbrain. In terms of tissue distribution, widely expressed at low levels. Highly expressed in melanoma cell lines.

The protein localises to the nucleus. Acts as a transcriptional repressor for zinc finger transcription factors EGR1 and EGR2. Isoform 2 lacks repression ability. This Homo sapiens (Human) protein is NGFI-A-binding protein 2 (NAB2).